Reading from the N-terminus, the 289-residue chain is Rhodopsin (289 aa).

The Extracellular portion of the chain corresponds to 1-7 (YLVNPAG). A helical transmembrane segment spans residues 8 to 32 (YAALGAYMFLLILIGSPVNFLTLYV). Over 33–44 (TLEHKKLRTPLN) the chain is Cytoplasmic. Residues 45-67 (YILLNLAVADLFMVLGGFTTTMY) form a helical membrane-spanning segment. Residues 68–81 (TSMHGYSVLGRLGC) lie on the Extracellular side of the membrane. A disulfide bridge connects residues Cys81 and Cys158. A helical membrane pass occupies residues 82 to 104 (ILEGFFATLGGEIALWSLVVLAI). The short motif at 105–107 (ERW) is the 'Ionic lock' involved in activated form stabilization element. The Cytoplasmic portion of the chain corresponds to 105 to 123 (ERWIVVCKPISNFRFTEDH). The helical transmembrane segment at 124–144 (AIMGLAFSWVMALACAVPPLV) threads the bilayer. Residues 145–173 (GWSRYIPEGMQCSCGVDYYTRAEGFNNES) lie on the Extracellular side of the membrane. An N-linked (GlcNAc...) asparagine glycan is attached at Asn171. A helical membrane pass occupies residues 174–195 (FVIYMFIVHFLIPLSVIFFCYG). The Cytoplasmic segment spans residues 196 to 223 (RLLCAVKEAAAAQQESETTQRPEKEVTR). Residues 224-245 (MVVIMVIAFLVCCLPNASVAWW) form a helical membrane-spanning segment. Over 246–257 (IFCNQGSDFGPI) the chain is Extracellular. Residues 258–279 (FMTLPSFFAKSAAIYNPMIYIC) form a helical membrane-spanning segment. Lys267 carries the post-translational modification N6-(retinylidene)lysine. At 280–289 (MNKQFRHCMI) the chain is on the cytoplasmic side.

It belongs to the G-protein coupled receptor 1 family. Opsin subfamily. Post-translationally, phosphorylated on some or all of the serine and threonine residues present in the C-terminal region. Contains one covalently linked retinal chromophore.

Its subcellular location is the membrane. The protein resides in the cell projection. It is found in the cilium. It localises to the photoreceptor outer segment. Functionally, photoreceptor required for image-forming vision at low light intensity. While most salt water fish species use retinal as chromophore, most freshwater fish use 3-dehydroretinal, or a mixture of retinal and 3-dehydroretinal. Light-induced isomerization of 11-cis to all-trans retinal triggers a conformational change that activates signaling via G-proteins. Subsequent receptor phosphorylation mediates displacement of the bound G-protein alpha subunit by arrestin and terminates signaling. This chain is Rhodopsin (rho), found in Limnocottus bergianus.